The following is a 232-amino-acid chain: MSNVDAAEIAKFSELAHRWWDPNSEFKPLHEINPLRLRWVDTRAPLAGKKVLDVGCGGGILAEAMAGVGATVSGIDLSEKALKVARLHLYESGKSVDYELVSAEDYAAAHPGEFDVVTCMEMLEHVPDPASVVAACARLVKPGGWVFFSTLNRNAKSYLLAVVGAEYILKLLPRGTHDYAKFIKPAELARMAREAGLETEELTGMTYNPLTKVYRLEADTDVNYLMATRREA.

The S-adenosyl-L-methionine site is built by R36, G55, D76, and M120.

This sequence belongs to the methyltransferase superfamily. UbiG/COQ3 family.

It carries out the reaction a 3-demethylubiquinol + S-adenosyl-L-methionine = a ubiquinol + S-adenosyl-L-homocysteine + H(+). The catalysed reaction is a 3-(all-trans-polyprenyl)benzene-1,2-diol + S-adenosyl-L-methionine = a 2-methoxy-6-(all-trans-polyprenyl)phenol + S-adenosyl-L-homocysteine + H(+). It participates in cofactor biosynthesis; ubiquinone biosynthesis. Functionally, O-methyltransferase that catalyzes the 2 O-methylation steps in the ubiquinone biosynthetic pathway. The chain is Ubiquinone biosynthesis O-methyltransferase from Thiobacillus denitrificans (strain ATCC 25259 / T1).